The primary structure comprises 133 residues: Protein OPG104 (133 aa).

The Virion surface segment spans residues 1–111 (MTDEQIYAFC…RYLNQEIRYP (111 aa)). Residues 112–132 (IIDIKWLPIGLLALAILILAF) traverse the membrane as a helical; Signal-anchor segment.

It belongs to the orthopoxvirus OPG104 family. Part of a stable entry-fusion complex (EFC) which is at least composed of proteins OPG143, OPG147, OPG155, OPG086, OPG094, OPG107, OPG104, and OPG099. Formation of the viral membrane is necessary for the assembly of the complex.

The protein resides in the virion membrane. In terms of biological role, envelope protein part of the entry-fusion complex responsible for the virus membrane fusion with host cell membrane during virus entry. Also plays a role in cell-cell fusion (syncytium formation). This chain is Protein OPG104 (OPG104), found in Variola virus (isolate Human/India/Ind3/1967) (VARV).